The following is a 456-amino-acid chain: Bifunctional protein GlmU (456 aa).

The tract at residues 1–229 is pyrophosphorylase; it reads MLNSAMSVVI…ISETDGVNNR (229 aa). UDP-N-acetyl-alpha-D-glucosamine contacts are provided by residues 11-14, Lys-25, Gln-76, 81-82, 103-105, Gly-140, Glu-154, Asn-169, and Asn-227; these read LAAG, GT, and YGD. A Mg(2+)-binding site is contributed by Asp-105. Mg(2+) is bound at residue Asn-227. Residues 230-250 are linker; sequence LQLSRLERIYQAEQAEKLLLS. Residues 251–456 form an N-acetyltransferase region; it reads GVMLRDPARF…QGWQRPVKKK (206 aa). Residues Arg-333 and Lys-351 each coordinate UDP-N-acetyl-alpha-D-glucosamine. The active-site Proton acceptor is the His-363. UDP-N-acetyl-alpha-D-glucosamine-binding residues include Tyr-366 and Asn-377. Residues Ala-380, 386-387, Ser-405, Ala-423, and Arg-440 each bind acetyl-CoA; that span reads NY.

It in the N-terminal section; belongs to the N-acetylglucosamine-1-phosphate uridyltransferase family. In the C-terminal section; belongs to the transferase hexapeptide repeat family. In terms of assembly, homotrimer. It depends on Mg(2+) as a cofactor.

It localises to the cytoplasm. It carries out the reaction alpha-D-glucosamine 1-phosphate + acetyl-CoA = N-acetyl-alpha-D-glucosamine 1-phosphate + CoA + H(+). The enzyme catalyses N-acetyl-alpha-D-glucosamine 1-phosphate + UTP + H(+) = UDP-N-acetyl-alpha-D-glucosamine + diphosphate. Its pathway is nucleotide-sugar biosynthesis; UDP-N-acetyl-alpha-D-glucosamine biosynthesis; N-acetyl-alpha-D-glucosamine 1-phosphate from alpha-D-glucosamine 6-phosphate (route II): step 2/2. The protein operates within nucleotide-sugar biosynthesis; UDP-N-acetyl-alpha-D-glucosamine biosynthesis; UDP-N-acetyl-alpha-D-glucosamine from N-acetyl-alpha-D-glucosamine 1-phosphate: step 1/1. It functions in the pathway bacterial outer membrane biogenesis; LPS lipid A biosynthesis. Its function is as follows. Catalyzes the last two sequential reactions in the de novo biosynthetic pathway for UDP-N-acetylglucosamine (UDP-GlcNAc). The C-terminal domain catalyzes the transfer of acetyl group from acetyl coenzyme A to glucosamine-1-phosphate (GlcN-1-P) to produce N-acetylglucosamine-1-phosphate (GlcNAc-1-P), which is converted into UDP-GlcNAc by the transfer of uridine 5-monophosphate (from uridine 5-triphosphate), a reaction catalyzed by the N-terminal domain. The sequence is that of Bifunctional protein GlmU from Salmonella schwarzengrund (strain CVM19633).